Consider the following 504-residue polypeptide: CDK5 regulatory subunit-associated protein 3 (504 aa).

Short sequence motifs (shuffled ATG8-binding motif) lie at residues 266–269 (IDWG), 290–293 (IDWG), and 308–311 (IDWG). Positions 268 to 504 (WGDFGLEAVS…RPVNLMGTSV (237 aa)) are required for interaction with UFL1 and mediates interaction with CHEK1. The RPL10a-binding domain (RBD) stretch occupies residues 353–368 (DELMELEIFLSQRAVE). K448 participates in a covalent cross-link: Glycyl lysine isopeptide (Lys-Gly) (interchain with G-Cter in SUMO2).

The protein belongs to the CDK5RAP3 family. Substrate adapter component of the UFM1 ribosome E3 ligase (UREL) complex, composed of UFL1, DDRGK1 and CDK5RAP3. Interaction with UFL1 anchors CDK5RAP3 in the cytoplasm, preventing its translocation to the nucleus which allows expression of the CCND1 cyclin and progression of cells through the G1/S transition. Interacts with ATG8 family proteins MAP1LC3A, MAP1LC3B, GABARAP, GABARAPL1 and GABARAPL2. Interacts with CDK5R1; competes with CDK5RAP1 and CDK5RAP2. Interacts with RELA. Interacts with CHEK1; may negatively regulate CHEK1 and thereby stimulate entry into mitosis. Interacts with CDKN2A/ARF and MDM2; forms a ternary complex involved in regulation of p53/TP53. Interacts with MAPK14. Interacts with CCNB1. Interacts with TUBG1; may regulate CDK5RAP3 in mitotic G2/M transition checkpoint. May be phosphorylated by CDK5. Post-translationally, ubiquitinated. Probably triggers proteasomal degradation and is negatively regulated by UFL1. In terms of processing, may be ufmylated. Cleaved by caspases early during apoptosis, the resulting peptides may play a role in rupture of the nuclear envelope. In terms of tissue distribution, expressed in vascular endothelium. Up-regulated in failing heart. Highly expressed in the ventricular section in subacute and chronic ischemic heart failure.

It is found in the endoplasmic reticulum membrane. It localises to the cytoplasm. The protein localises to the nucleus. The protein resides in the cytoskeleton. Its subcellular location is the microtubule organizing center. It is found in the centrosome. Its function is as follows. Substrate adapter of E3 ligase complexes mediating ufmylation, the covalent attachment of the ubiquitin-like modifier UFM1 to substrate proteins, and which is involved in various processes, such as ribosome recycling and reticulophagy (also called ER-phagy). As part of the UREL complex, plays a key role in ribosome recycling by promoting mono-ufmylation of RPL26/uL24 subunit of the 60S ribosome. Ufmylation of RPL26/uL24 occurs on free 60S ribosomes following ribosome dissociation: it weakens the junction between post-termination 60S subunits and SEC61 translocons, promoting release and recycling of the large ribosomal subunit from the endoplasmic reticulum membrane. Ufmylation of RPL26/uL24 and subsequent 60S ribosome recycling either take place after normal termination of translation or after ribosome stalling during cotranslational translocation at the endoplasmic reticulum. Within the UREL complex, CDK5RAP3 acts as a substrate adapter that constrains UFL1 ligase activity to mono-ufmylate RPL26/uL24 at 'Lys-134'. The UREL complex is also involved in reticulophagy in response to endoplasmic reticulum stress by promoting ufmylation of proteins such as CYB5R3, thereby promoting lysosomal degradation of ufmylated proteins. Also acts as a regulator of transcription: negatively regulates NF-kappa-B-mediated gene transcription through the control of RELA phosphorylation. Also regulates mitotic G2/M transition checkpoint and mitotic G2 DNA damage checkpoint. Through its interaction with CDKN2A/ARF and MDM2 may induce MDM2-dependent p53/TP53 ubiquitination, stabilization and activation in the nucleus, thereby promoting G1 cell cycle arrest and inhibition of cell proliferation. May also play a role in the rupture of the nuclear envelope during apoptosis. May regulate MAPK14 activity by regulating its dephosphorylation by PPM1D/WIP1. Required for liver development. This is CDK5 regulatory subunit-associated protein 3 from Rattus norvegicus (Rat).